A 682-amino-acid chain; its full sequence is Protein asunder (682 aa).

Residues 517–570 adopt a coiled-coil conformation; it reads NGARLKLSKAKDQYRLLYRELEQLIHLNATTVHHKNLLESLQSLRAAYGEAKSE. Positions 571–583 are enriched in polar residues; the sequence is PNSSLLRSYTESP. Residues 571 to 612 are disordered; the sequence is PNSSLLRSYTESPHSPERLEPIPSGGSSGSNSNSLLKASKRR. A Nuclear localization signal (NLS) motif is present at residues 606–612; that stretch reads LKASKRR.

This sequence belongs to the Integrator subunit 13 family. In terms of assembly, belongs to the multiprotein complex Integrator, at least composed of IntS1, IntS2, IntS3, IntS4, omd/IntS5, IntS6, defl/IntS7, IntS8, IntS9, IntS10, IntS11, IntS12, asun/IntS13, IntS14 and IntS15. The core complex associates with protein phosphatase 2A subunits mts/PP2A and Pp2A-29B, to form the Integrator-PP2A (INTAC) complex. In terms of processing, phosphorylated.

The protein localises to the nucleus. It is found in the cytoplasm. The protein resides in the perinuclear region. Component of the integrator complex, a multiprotein complex that terminates RNA polymerase II (Pol II) transcription in the promoter-proximal region of genes. The integrator complex provides a quality checkpoint during transcription elongation by driving premature transcription termination of transcripts that are unfavorably configured for transcriptional elongation: the complex terminates transcription by (1) catalyzing dephosphorylation of the C-terminal domain (CTD) of Pol II subunit Polr2A/Rbp1 and Spt5, and (2) degrading the exiting nascent RNA transcript via endonuclease activity. The integrator complex is also involved in the 3'-end processing of the U7 snRNA, and also the spliceosomal snRNAs U1, U2, U4 and U5. The sequence is that of Protein asunder (asun) from Drosophila ananassae (Fruit fly).